Here is a 339-residue protein sequence, read N- to C-terminus: Dihydroorotate dehydrogenase (quinone) (339 aa).

Residues 61–65 and T85 contribute to the FMN site; that span reads AGLDK. Residue K65 coordinates substrate. 110 to 114 provides a ligand contact to substrate; that stretch reads NRMGF. FMN-binding residues include N138 and N171. N171 lines the substrate pocket. S174 functions as the Nucleophile in the catalytic mechanism. Substrate is bound at residue N176. Residues K216 and T244 each contribute to the FMN site. 245–246 lines the substrate pocket; it reads NT. Residues G267, G296, and 317-318 contribute to the FMN site; that span reads YS.

Belongs to the dihydroorotate dehydrogenase family. Type 2 subfamily. Monomer. It depends on FMN as a cofactor.

The protein resides in the cell membrane. It catalyses the reaction (S)-dihydroorotate + a quinone = orotate + a quinol. It functions in the pathway pyrimidine metabolism; UMP biosynthesis via de novo pathway; orotate from (S)-dihydroorotate (quinone route): step 1/1. Its function is as follows. Catalyzes the conversion of dihydroorotate to orotate with quinone as electron acceptor. The polypeptide is Dihydroorotate dehydrogenase (quinone) (Saccharophagus degradans (strain 2-40 / ATCC 43961 / DSM 17024)).